The following is a 299-amino-acid chain: Taste receptor type 2 member 4 (299 aa).

At 1 to 9 the chain is on the extracellular side; the sequence is MLRLFYFSA. A helical membrane pass occupies residues 10–30; the sequence is IIASVILNFVGIIMNLFITVV. Residues 31-46 lie on the Cytoplasmic side of the membrane; sequence NCKTWVKSHRISSSDR. A helical transmembrane segment spans residues 47 to 67; that stretch reads ILFSLGITRFLMLGLFLVNTI. The Extracellular portion of the chain corresponds to 68 to 81; that stretch reads YFVSSNTERSVYLS. The chain crosses the membrane as a helical span at residues 82-102; that stretch reads AFFVLCFMFLDSSSVWFVTLL. Residues 103-131 are Cytoplasmic-facing; the sequence is NILYCVKITNFQHSVFLLLKRNISPKIPR. Residues 132 to 152 traverse the membrane as a helical segment; the sequence is LLLACVLISAFTTCLYITLSQ. At 153-172 the chain is on the extracellular side; the sequence is ASPFPELVTTRNNTSFNISE. N-linked (GlcNAc...) asparagine glycans are attached at residues asparagine 164, asparagine 165, and asparagine 169. A helical membrane pass occupies residues 173-193; sequence GILSLVVSLVLSSSLQFIINV. The Cytoplasmic portion of the chain corresponds to 194 to 230; it reads TSASLLIHSLRRHIQKMQKNATGFWNPQTEAHVGAMK. The chain crosses the membrane as a helical span at residues 231-251; it reads LMVYFLILYIPYSVATLVQYL. Residues 252–262 lie on the Extracellular side of the membrane; sequence PFYAGMDMGTK. The helical transmembrane segment at 263-283 threads the bilayer; the sequence is SICLIFATLYSPGHSVLIIIT. Over 284–299 the chain is Cytoplasmic; it reads HPKLKTTAKKILCFKK.

It belongs to the G-protein coupled receptor T2R family. In terms of tissue distribution, expressed in subsets of taste receptor cells of the tongue and palate epithelium and exclusively in gustducin-positive cells. Expressed on airway ciliated epithelium.

Its subcellular location is the membrane. It localises to the cell projection. It is found in the cilium membrane. Its function is as follows. Gustducin-coupled receptor for denatonium and N(6)-propyl-2-thiouracil implicated in the perception of bitter compounds in the oral cavity and the gastrointestinal tract. Signals through PLCB2 and the calcium-regulated cation channel TRPM5. In airway epithelial cells, binding of denatonium increases the intracellular calcium ion concentration and stimulates ciliary beat frequency. The polypeptide is Taste receptor type 2 member 4 (TAS2R4) (Homo sapiens (Human)).